The primary structure comprises 901 residues: Protein translocase subunit SecA (901 aa).

ATP contacts are provided by residues Gln-85, 103–107 (GEGKT), and Asp-510. Residues 836-845 (EEAERARQEM) are compositionally biased toward basic and acidic residues. The segment at 836–901 (EEAERARQEM…HCHGSRVARQ (66 aa)) is disordered. Residues 849–866 (INQNNLPVDENSQTTQNS) are compositionally biased toward polar residues. Zn(2+) is bound by residues Cys-882, Cys-884, Cys-893, and His-894. Residues 888 to 901 (KKYKHCHGSRVARQ) show a composition bias toward basic residues.

It belongs to the SecA family. In terms of assembly, monomer and homodimer. Part of the essential Sec protein translocation apparatus which comprises SecA, SecYEG and auxiliary proteins SecDF-YajC and YidC. It depends on Zn(2+) as a cofactor.

The protein resides in the cell inner membrane. The protein localises to the cytoplasm. The enzyme catalyses ATP + H2O + cellular proteinSide 1 = ADP + phosphate + cellular proteinSide 2.. In terms of biological role, part of the Sec protein translocase complex. Interacts with the SecYEG preprotein conducting channel. Has a central role in coupling the hydrolysis of ATP to the transfer of proteins into and across the cell membrane, serving both as a receptor for the preprotein-SecB complex and as an ATP-driven molecular motor driving the stepwise translocation of polypeptide chains across the membrane. The sequence is that of Protein translocase subunit SecA from Haemophilus influenzae (strain PittEE).